The sequence spans 220 residues: Zinc finger protein 36 (220 aa).

The segment at 73-95 adopts a C2H2-type 1 zinc-finger fold; sequence FRCTVCGKAFASYQALGGHKSSH. The tract at residues 90-134 is disordered; it reads GHKSSHRKPPSPGDHYGAAAAAQQLASAGDSKEDSASSAAGSTGP. Residues 107 to 117 show a composition bias toward low complexity; that stretch reads AAAAAQQLASA. Residues 135–157 form a C2H2-type 2 zinc finger; it reads HRCTICRRSFATGQALGGHKRCH.

Functionally, probable transcription factor involved in abscisic acid (ABA) signaling. Required for the regulation of the cross-talk between NADPH oxidase, hydrogen peroxide and MAP kinase in ABA signaling. Regulates the expression of the NADPH oxidase genes RBOHB and RBOHE, and the MAPK genes MPK1, MPK4, MPK5, MPK7 and MPK14. Regulates ABA-induced hydrogen peroxide production and antioxidant defense. Required for tolerance to water stress and oxidative stress. The polypeptide is Zinc finger protein 36 (Oryza sativa subsp. japonica (Rice)).